A 207-amino-acid chain; its full sequence is Alpha/beta-tubulin-N-acetyltransferase 9 (207 aa).

The 146-residue stretch at 35 to 180 (EELQRLTASE…QEVTLRLTVS (146 aa)) folds into the N-acetyltransferase domain.

This sequence belongs to the acetyltransferase family. GNAT subfamily.

The enzyme catalyses N-terminal L-methionyl-[tubulin] + acetyl-CoA = N-terminal N(alpha)-acetyl-L-methionyl-[tubulin] + CoA + H(+). N-acetyltransferase that mediates the acetylation of the N-terminal residues of alpha- and beta-tubulin. This is Alpha/beta-tubulin-N-acetyltransferase 9 (NAT9) from Homo sapiens (Human).